A 66-amino-acid polypeptide reads, in one-letter code: Cell division protein FtsB (66 aa).

Residues 1 to 3 (MKM) are Cytoplasmic-facing. A helical transmembrane segment spans residues 4–21 (LKIFLLFLLFWLQCSLWI). The Extracellular segment spans residues 22-66 (GKNGILDYIKIYKKIIVQKKKNEDFQIRNNQLILEIERLNNAIKN). A coiled-coil region spans residues 38–66 (VQKKKNEDFQIRNNQLILEIERLNNAIKN).

The protein belongs to the FtsB family.

Its subcellular location is the cell membrane. Its function is as follows. Essential cell division protein. May link together the upstream cell division proteins, which are predominantly cytoplasmic, with the downstream cell division proteins, which are predominantly extracellular. The sequence is that of Cell division protein FtsB from Buchnera aphidicola subsp. Schizaphis graminum (strain Sg).